Consider the following 247-residue polypeptide: Aspartate/glutamate leucyltransferase (247 aa).

This sequence belongs to the R-transferase family. Bpt subfamily.

It is found in the cytoplasm. The catalysed reaction is N-terminal L-glutamyl-[protein] + L-leucyl-tRNA(Leu) = N-terminal L-leucyl-L-glutamyl-[protein] + tRNA(Leu) + H(+). It catalyses the reaction N-terminal L-aspartyl-[protein] + L-leucyl-tRNA(Leu) = N-terminal L-leucyl-L-aspartyl-[protein] + tRNA(Leu) + H(+). Functions in the N-end rule pathway of protein degradation where it conjugates Leu from its aminoacyl-tRNA to the N-termini of proteins containing an N-terminal aspartate or glutamate. The polypeptide is Aspartate/glutamate leucyltransferase (Chromohalobacter salexigens (strain ATCC BAA-138 / DSM 3043 / CIP 106854 / NCIMB 13768 / 1H11)).